Reading from the N-terminus, the 290-residue chain is UPF0761 membrane protein YihY (290 aa).

A run of 6 helical transmembrane segments spans residues 44–64 (LLSL…FPMF), 104–124 (VGAC…DSAL), 140–160 (FAVY…SLAI), 183–203 (IFPL…VPTI), 210–230 (AIVG…GFAL), and 244–264 (VLAV…IVLL).

The protein belongs to the UPF0761 family.

Its subcellular location is the cell inner membrane. The protein is UPF0761 membrane protein YihY of Escherichia fergusonii (strain ATCC 35469 / DSM 13698 / CCUG 18766 / IAM 14443 / JCM 21226 / LMG 7866 / NBRC 102419 / NCTC 12128 / CDC 0568-73).